The following is a 377-amino-acid chain: Queuine tRNA-ribosyltransferase (377 aa).

Asp-89 acts as the Proton acceptor in catalysis. Residues 89–93, Asp-143, Gln-187, and Gly-214 contribute to the substrate site; that span reads DSGGF. Positions 245 to 251 are RNA binding; it reads GVGKPED. Residue Asp-264 is the Nucleophile of the active site. The RNA binding; important for wobble base 34 recognition stretch occupies residues 269–273; the sequence is TRNAR. Positions 302, 304, 307, and 333 each coordinate Zn(2+).

This sequence belongs to the queuine tRNA-ribosyltransferase family. In terms of assembly, homodimer. Within each dimer, one monomer is responsible for RNA recognition and catalysis, while the other monomer binds to the replacement base PreQ1. Requires Zn(2+) as cofactor.

The catalysed reaction is 7-aminomethyl-7-carbaguanine + guanosine(34) in tRNA = 7-aminomethyl-7-carbaguanosine(34) in tRNA + guanine. It participates in tRNA modification; tRNA-queuosine biosynthesis. Functionally, catalyzes the base-exchange of a guanine (G) residue with the queuine precursor 7-aminomethyl-7-deazaguanine (PreQ1) at position 34 (anticodon wobble position) in tRNAs with GU(N) anticodons (tRNA-Asp, -Asn, -His and -Tyr). Catalysis occurs through a double-displacement mechanism. The nucleophile active site attacks the C1' of nucleotide 34 to detach the guanine base from the RNA, forming a covalent enzyme-RNA intermediate. The proton acceptor active site deprotonates the incoming PreQ1, allowing a nucleophilic attack on the C1' of the ribose to form the product. After dissociation, two additional enzymatic reactions on the tRNA convert PreQ1 to queuine (Q), resulting in the hypermodified nucleoside queuosine (7-(((4,5-cis-dihydroxy-2-cyclopenten-1-yl)amino)methyl)-7-deazaguanosine). The protein is Queuine tRNA-ribosyltransferase of Shewanella halifaxensis (strain HAW-EB4).